The chain runs to 382 residues: uncharacterized protein (382 aa).

Transmembrane regions (helical) follow at residues 14–34 (GLLL…LWLA), 45–65 (VVSS…GYVI), 79–99 (FIFA…SWLA), 102–122 (FVAG…LMCS), 131–151 (LLAA…LLVS), 157–177 (LMSV…PLLF), 204–224 (LGVN…GLMP), 235–255 (ASIG…QWPI), 270–290 (VQVF…AMAP), 291–311 (ALFI…AWAC), 325–345 (ALLL…AMLM), and 348–368 (FSDN…LLML).

This sequence belongs to the major facilitator superfamily. YcaD (TC 2.A.1.26) family.

The protein resides in the cell inner membrane. This is an uncharacterized protein from Escherichia coli (strain K12 / MC4100 / BW2952).